A 509-amino-acid chain; its full sequence is Photosystem II CP47 reaction center protein (509 aa).

6 helical membrane-spanning segments follow: residues 21 to 36 (AVHMMHTALVAGWAGS), 101 to 115 (IVFSGLCFLAAIWHW), 140 to 156 (GIHLFLSGVACFGFGAF), 203 to 218 (IAAGTLGILAGLFHLS), 237 to 253 (VLSSSSIAAVFFAAFVV), and 458 to 473 (SFALLFFFGHIWHGSR).

The protein belongs to the PsbB/PsbC family. PsbB subfamily. In terms of assembly, PSII is composed of 1 copy each of membrane proteins PsbA, PsbB, PsbC, PsbD, PsbE, PsbF, PsbH, PsbI, PsbJ, PsbK, PsbL, PsbM, PsbT, PsbX, PsbY, PsbZ, Psb30/Ycf12, at least 3 peripheral proteins of the oxygen-evolving complex and a large number of cofactors. It forms dimeric complexes. Requires Binds multiple chlorophylls. PSII binds additional chlorophylls, carotenoids and specific lipids. as cofactor.

It localises to the plastid. The protein localises to the chloroplast thylakoid membrane. One of the components of the core complex of photosystem II (PSII). It binds chlorophyll and helps catalyze the primary light-induced photochemical processes of PSII. PSII is a light-driven water:plastoquinone oxidoreductase, using light energy to abstract electrons from H(2)O, generating O(2) and a proton gradient subsequently used for ATP formation. The sequence is that of Photosystem II CP47 reaction center protein from Populus deltoides (Eastern poplar).